We begin with the raw amino-acid sequence, 291 residues long: MRFVIVTGMSGAGKSLVTKYLEDIGFFCVDNLPPALIPKFAEISAQSEGKMEKIALVIDIRGGELLHDLFPALEEVKKSGFSYEILFLEADDDVLVKRYKESRRQHPLAPEGRLLLGIREERKALQTIKSKANYIIDTSTLVTRQLKQEINGIFLEGKIFKGIIINVVSFGFKYGIPTDCDLVFDVRFIPNPYYIAPMKNQTGKDQMVKEFVLNASETKEFISKLDGMLDFLIPNYIKEGKSQLDIGIGCTGGRHRSVAIADEVYRRLEEKMHSVVIEHRDIEKDGKGVGK.

An ATP-binding site is contributed by Gly-8–Ser-15. Asp-59–Gly-62 is a GTP binding site.

The protein belongs to the RapZ-like family.

Functionally, displays ATPase and GTPase activities. This is Nucleotide-binding protein Ccel_2290 from Ruminiclostridium cellulolyticum (strain ATCC 35319 / DSM 5812 / JCM 6584 / H10) (Clostridium cellulolyticum).